Reading from the N-terminus, the 117-residue chain is UPF0342 protein BLi01058/BL02870 (117 aa).

It belongs to the UPF0342 family.

In Bacillus licheniformis (strain ATCC 14580 / DSM 13 / JCM 2505 / CCUG 7422 / NBRC 12200 / NCIMB 9375 / NCTC 10341 / NRRL NRS-1264 / Gibson 46), this protein is UPF0342 protein BLi01058/BL02870.